We begin with the raw amino-acid sequence, 210 residues long: Probable GTP-binding protein EngB (210 aa).

One can recognise an EngB-type G domain in the interval 24–199; sequence QGCEVAFAGR…WEVLGRWLDL (176 aa). GTP-binding positions include 32–39, 59–63, 77–80, 144–147, and 178–180; these read GRSNAGKS, GRTRM, DLPG, TKSD, and FSS. Positions 39 and 61 each coordinate Mg(2+).

Belongs to the TRAFAC class TrmE-Era-EngA-EngB-Septin-like GTPase superfamily. EngB GTPase family. Mg(2+) serves as cofactor.

In terms of biological role, necessary for normal cell division and for the maintenance of normal septation. The chain is Probable GTP-binding protein EngB from Methylococcus capsulatus (strain ATCC 33009 / NCIMB 11132 / Bath).